A 354-amino-acid chain; its full sequence is Probable L-ascorbate-6-phosphate lactonase UlaG (354 aa).

This sequence belongs to the UlaG family. The cofactor is a divalent metal cation.

The protein resides in the cytoplasm. The enzyme catalyses L-ascorbate 6-phosphate + H2O = 3-dehydro-L-gulonate 6-phosphate. The protein operates within cofactor degradation; L-ascorbate degradation; D-xylulose 5-phosphate from L-ascorbate: step 1/4. Functionally, probably catalyzes the hydrolysis of L-ascorbate-6-P into 3-keto-L-gulonate-6-P. Is essential for L-ascorbate utilization under anaerobic conditions. The protein is Probable L-ascorbate-6-phosphate lactonase UlaG of Escherichia coli O127:H6 (strain E2348/69 / EPEC).